We begin with the raw amino-acid sequence, 930 residues long: Isoleucine--tRNA ligase (930 aa).

The short motif at 57-67 (PYANGHIHLGT) is the 'HIGH' region element. Glutamate 559 contributes to the L-isoleucyl-5'-AMP binding site. The 'KMSKS' region motif lies at 600 to 604 (KMSKS). Residue lysine 603 coordinates ATP. Residues cysteine 899, cysteine 902, cysteine 918, and cysteine 921 each coordinate Zn(2+).

Belongs to the class-I aminoacyl-tRNA synthetase family. IleS type 1 subfamily. In terms of assembly, monomer. Zn(2+) is required as a cofactor.

The protein resides in the cytoplasm. The enzyme catalyses tRNA(Ile) + L-isoleucine + ATP = L-isoleucyl-tRNA(Ile) + AMP + diphosphate. In terms of biological role, catalyzes the attachment of isoleucine to tRNA(Ile). As IleRS can inadvertently accommodate and process structurally similar amino acids such as valine, to avoid such errors it has two additional distinct tRNA(Ile)-dependent editing activities. One activity is designated as 'pretransfer' editing and involves the hydrolysis of activated Val-AMP. The other activity is designated 'posttransfer' editing and involves deacylation of mischarged Val-tRNA(Ile). In Desulforudis audaxviator (strain MP104C), this protein is Isoleucine--tRNA ligase.